The sequence spans 510 residues: GMP synthase [glutamine-hydrolyzing] (510 aa).

Residues 5–195 (LVLVVDFGGQ…LFNVCNLKGD (191 aa)) enclose the Glutamine amidotransferase type-1 domain. Cys82 serves as the catalytic Nucleophile. Residues His169 and Glu171 contribute to the active site. Positions 196–385 (WSMSSFAEQQ…LGIPHKLVWR (190 aa)) constitute a GMPS ATP-PPase domain. 223–229 (SGGVDSS) serves as a coordination point for ATP.

As to quaternary structure, homodimer.

The catalysed reaction is XMP + L-glutamine + ATP + H2O = GMP + L-glutamate + AMP + diphosphate + 2 H(+). It participates in purine metabolism; GMP biosynthesis; GMP from XMP (L-Gln route): step 1/1. Catalyzes the synthesis of GMP from XMP. The chain is GMP synthase [glutamine-hydrolyzing] from Clostridium botulinum (strain ATCC 19397 / Type A).